Here is a 317-residue protein sequence, read N- to C-terminus: Beta-ketoacyl-[acyl-carrier-protein] synthase III (317 aa).

Residues Cys-112 and His-244 contribute to the active site. Positions 245 to 249 are ACP-binding; sequence QANLR. Residue Asn-274 is part of the active site.

This sequence belongs to the thiolase-like superfamily. FabH family. As to quaternary structure, homodimer.

The protein localises to the cytoplasm. It carries out the reaction malonyl-[ACP] + acetyl-CoA + H(+) = 3-oxobutanoyl-[ACP] + CO2 + CoA. Its pathway is lipid metabolism; fatty acid biosynthesis. In terms of biological role, catalyzes the condensation reaction of fatty acid synthesis by the addition to an acyl acceptor of two carbons from malonyl-ACP. Catalyzes the first condensation reaction which initiates fatty acid synthesis and may therefore play a role in governing the total rate of fatty acid production. Possesses both acetoacetyl-ACP synthase and acetyl transacylase activities. Its substrate specificity determines the biosynthesis of branched-chain and/or straight-chain of fatty acids. This Salmonella paratyphi B (strain ATCC BAA-1250 / SPB7) protein is Beta-ketoacyl-[acyl-carrier-protein] synthase III.